Reading from the N-terminus, the 328-residue chain is Cytochrome c biogenesis protein CcsA (328 aa).

The next 8 membrane-spanning stretches (helical) occupy residues 13 to 33, 46 to 66, 73 to 93, 101 to 121, 146 to 166, 234 to 254, 263 to 283, and 295 to 315; these read ISFS…LVNL, GIII…IFSG, LYES…VSYF, LNAI…SGLL, MILG…LLVI, IISL…VWAN, WDPK…YLHI, and AIVA…VNLL.

The protein belongs to the CcmF/CycK/Ccl1/NrfE/CcsA family. May interact with Ccs1.

It localises to the plastid. The protein resides in the chloroplast thylakoid membrane. Required during biogenesis of c-type cytochromes (cytochrome c6 and cytochrome f) at the step of heme attachment. In Olimarabidopsis pumila (Dwarf rocket), this protein is Cytochrome c biogenesis protein CcsA.